The following is a 271-amino-acid chain: Mannosyl-3-phosphoglycerate phosphatase (271 aa).

Asp13 serves as the catalytic Nucleophile. Mg(2+) contacts are provided by Asp13, Asp15, and Asp214.

The protein belongs to the HAD-like hydrolase superfamily. MPGP family. Requires Mg(2+) as cofactor.

The protein resides in the cytoplasm. It carries out the reaction 2-O-(alpha-D-mannosyl)-3-phosphoglycerate + H2O = (2R)-2-O-(alpha-D-mannosyl)-glycerate + phosphate. The sequence is that of Mannosyl-3-phosphoglycerate phosphatase from Escherichia coli (strain SE11).